The chain runs to 103 residues: Integration host factor subunit beta (103 aa).

The disordered stretch occupies residues 59-82 (RLGRNPKTGESVALPGKHVPHFKP).

It belongs to the bacterial histone-like protein family. In terms of assembly, heterodimer of an alpha and a beta chain.

Its function is as follows. This protein is one of the two subunits of integration host factor, a specific DNA-binding protein that functions in genetic recombination as well as in transcriptional and translational control. This is Integration host factor subunit beta from Xanthomonas oryzae pv. oryzae (strain MAFF 311018).